A 320-amino-acid chain; its full sequence is Mitochondrial thiamine pyrophosphate carrier (320 aa).

Solcar repeat units follow at residues 13-106 (NTKL…LTEL), 116-202 (REFS…LKHL), and 214-309 (NENL…FCNV). Residues 19–39 (AVAGSVSGLVTRALISPFDVI) form a helical membrane-spanning segment. S51 bears the Phosphoserine mark. Transmembrane regions (helical) follow at residues 87–107 (ILSI…TELV), 122–142 (FVCG…VDVL), 173–193 (VFYK…GLQF), and 220–240 (LLCG…LDLF). The Substrate recognition motif lies at 241–246 (KKRLQV). The chain crosses the membrane as a helical span at residues 293 to 313 (ALSTGFMFFWYEFFCNVFHCM).

It belongs to the mitochondrial carrier (TC 2.A.29) family.

It is found in the mitochondrion membrane. It catalyses the reaction thiamine phosphate(out) + thiamine diphosphate(in) = thiamine phosphate(in) + thiamine diphosphate(out). In terms of biological role, mitochondrial transporter mediating uptake of thiamine diphosphate into mitochondria. It is not clear if the antiporter activity is affected by the membrane potential or by the proton electrochemical gradient. This chain is Mitochondrial thiamine pyrophosphate carrier (SLC25A19), found in Macaca fascicularis (Crab-eating macaque).